A 250-amino-acid polypeptide reads, in one-letter code: Glycerol-1-phosphate phosphohydrolase 2 (250 aa).

Asp-18 serves as the catalytic Nucleophile. Residues Asp-18 and Asp-20 each contribute to the Mg(2+) site. The active-site Proton donor is the Asp-20. Lys-64 is covalently cross-linked (Glycyl lysine isopeptide (Lys-Gly) (interchain with G-Cter in ubiquitin)). Position 90 is a phosphoserine (Ser-90). Lys-144 is covalently cross-linked (Glycyl lysine isopeptide (Lys-Gly) (interchain with G-Cter in ubiquitin)). Position 179 (Asp-179) interacts with Mg(2+).

The protein belongs to the HAD-like hydrolase superfamily. DOG/GPP family. As to quaternary structure, monomer. Mg(2+) is required as a cofactor.

The protein localises to the cytoplasm. Its subcellular location is the nucleus. It carries out the reaction sn-glycerol 1-phosphate + H2O = glycerol + phosphate. It catalyses the reaction sn-glycerol 3-phosphate + H2O = glycerol + phosphate. In terms of biological role, glycerol-1-phosphate phosphohydrolase involved in glycerol biosynthesis. Plays a role in osmoadaptation. This is Glycerol-1-phosphate phosphohydrolase 2 from Saccharomyces cerevisiae (strain ATCC 204508 / S288c) (Baker's yeast).